The sequence spans 117 residues: Venom nerve growth factor (117 aa).

3 disulfides stabilise this stretch: cysteine 12-cysteine 77, cysteine 55-cysteine 105, and cysteine 65-cysteine 107. The N-linked (GlcNAc...) asparagine glycan is linked to asparagine 21.

This sequence belongs to the NGF-beta family. As to quaternary structure, homodimer; non-covalently linked. Expressed by the venom gland.

Its subcellular location is the secreted. Its function is as follows. Nerve growth factor is important for the development and maintenance of the sympathetic and sensory nervous systems. It stimulates division and differentiation of sympathetic and embryonic sensory neurons as well as basal forebrain cholinergic neurons in the brain. Its relevance in the snake venom is not clear. However, it has been shown to inhibit metalloproteinase-dependent proteolysis of platelet glycoprotein Ib alpha, suggesting a metalloproteinase inhibition to prevent metalloprotease autodigestion and/or protection against prey proteases. Binds a lipid between the two protein chains in the homodimer. The lipid-bound form promotes histamine relase from mouse mast cells, contrary to the lipid-free form. The polypeptide is Venom nerve growth factor (Daboia russelii (Russel's viper)).